The sequence spans 199 residues: N-(5'-phosphoribosyl)anthranilate isomerase (199 aa).

Belongs to the TrpF family.

It carries out the reaction N-(5-phospho-beta-D-ribosyl)anthranilate = 1-(2-carboxyphenylamino)-1-deoxy-D-ribulose 5-phosphate. It functions in the pathway amino-acid biosynthesis; L-tryptophan biosynthesis; L-tryptophan from chorismate: step 3/5. The chain is N-(5'-phosphoribosyl)anthranilate isomerase from Streptococcus pneumoniae serotype 19F (strain G54).